We begin with the raw amino-acid sequence, 639 residues long: Protein sly1 homolog (639 aa).

4 tandem repeats follow at residues 85 to 121 (DENL…NLAA), 203 to 245 (RNSA…FSFQ), 423 to 460 (LDLL…ERLK), and 464 to 500 (QAAG…GGGT). Residues 85–500 (DENLDRIQQD…QATQYEGGGT (416 aa)) are 4 X approximate repeats.

Belongs to the STXBP/unc-18/SEC1 family. As to expression, in embryos, from stage 14, expression is seen in posterior midgut, esophagus and salivary glands. No expression is seen in larval imaginal disks.

The protein resides in the cytoplasm. The protein localises to the membrane. Its function is as follows. Non-vital for development. In Drosophila melanogaster (Fruit fly), this protein is Protein sly1 homolog (Slh).